Consider the following 424-residue polypeptide: Kynureninase (424 aa).

Pyridoxal 5'-phosphate-binding positions include L105, S106, 133 to 136, D218, H221, and Y243; that span reads FPTD. Position 244 is an N6-(pyridoxal phosphate)lysine (K244). W274 and N302 together coordinate pyridoxal 5'-phosphate.

It belongs to the kynureninase family. In terms of assembly, homodimer. The cofactor is pyridoxal 5'-phosphate.

It carries out the reaction L-kynurenine + H2O = anthranilate + L-alanine + H(+). It catalyses the reaction 3-hydroxy-L-kynurenine + H2O = 3-hydroxyanthranilate + L-alanine + H(+). The protein operates within amino-acid degradation; L-kynurenine degradation; L-alanine and anthranilate from L-kynurenine: step 1/1. It participates in cofactor biosynthesis; NAD(+) biosynthesis; quinolinate from L-kynurenine: step 2/3. Catalyzes the cleavage of L-kynurenine (L-Kyn) and L-3-hydroxykynurenine (L-3OHKyn) into anthranilic acid (AA) and 3-hydroxyanthranilic acid (3-OHAA), respectively. This chain is Kynureninase, found in Stenotrophomonas maltophilia (strain K279a).